A 558-amino-acid polypeptide reads, in one-letter code: Membrane protein insertase YidC (558 aa).

Helical transmembrane passes span 5–25 (IINL…WQYF), 332–352 (AIDF…MNFF), 355–375 (YVGN…LLMF), 429–449 (LPIL…YVTI), 474–494 (LFGL…WPIL), and 520–540 (FMPL…LIYW).

This sequence belongs to the OXA1/ALB3/YidC family. Type 1 subfamily. In terms of assembly, interacts with the Sec translocase complex via SecD. Specifically interacts with transmembrane segments of nascent integral membrane proteins during membrane integration.

It localises to the cell inner membrane. Its function is as follows. Required for the insertion and/or proper folding and/or complex formation of integral membrane proteins into the membrane. Involved in integration of membrane proteins that insert both dependently and independently of the Sec translocase complex, as well as at least some lipoproteins. Aids folding of multispanning membrane proteins. This is Membrane protein insertase YidC from Rickettsia typhi (strain ATCC VR-144 / Wilmington).